A 476-amino-acid polypeptide reads, in one-letter code: MASPFSGALQLTDLDDFIGPSQSCIKPVTVAKKPGSGIAKIHIEDDGSYFQVNPDGRSQKLEKAKVSLNDCLACSGCVTSAETILITQQSHEELRKVLDANKVAAPGQQRLVVVSVSPQSRASLAARFQLDSTDTARKLTSFFKKIGVHFVFDTAFARNFSLLESQKEFVQRFREQANSREALPMLASACPGWICYAEKTHGNFILPYISTARSPQQVMGSLIKDFFAQQQLLTPDKIYHVTVMPCYDKKLEASRPDFFNQEYQTRDVDCVLTTGEVFRLLEEEGVSLSELEPVPLDGLTRSVSAEEPTSHRGGGSGGYLEHVFRHAAQELFGIHVADVTYQPMRNKDFQEVTLEREGQVLLRFAVAYGFRNIQNLVQKLKRGRCPYHYVEVMACPSGCLNGGGQLKAPDTEGRELLQQVERLYSMVRTEAPEDAPGVQELYQHWLQGEDSERASHLLHTQYHAVEKINSGLSIRW.

Ala-2 is modified (N-acetylalanine). [4Fe-4S] cluster contacts are provided by Cys-24, Cys-71, Cys-74, Cys-77, Cys-190, Cys-246, Cys-395, and Cys-399.

It belongs to the NARF family. External component of the CIA complex. In the CIA complex, interacts directly with CIAO1 and MMS19.

In terms of biological role, component of the cytosolic iron-sulfur protein assembly (CIA) complex, a multiprotein complex that mediates the incorporation of iron-sulfur cluster into extramitochondrial Fe/S proteins. Seems to negatively regulate the level of HIF1A expression, although this effect could be indirect. The sequence is that of Cytosolic iron-sulfur assembly component 3 from Rattus norvegicus (Rat).